Here is a 449-residue protein sequence, read N- to C-terminus: Putative recombination initiation defects 3 (449 aa).

Residues 21-56 form a disordered region; sequence LRRSAEPQASQQLRSQQSQQSFSQGPSSSQRGCGGF. Residues 28-50 are compositionally biased toward low complexity; sequence QASQQLRSQQSQQSFSQGPSSSQ. Residues 437–441 carry the Nuclear localization signal motif; the sequence is RTKRK.

In terms of assembly, interacts with PRD1; this interaction facilitates a binding to DFO.

Its subcellular location is the nucleus. In terms of biological role, involved in DNA cleavage that forms the double-strand breaks (DSB) that initiate meiotic recombination. The sequence is that of Putative recombination initiation defects 3 from Arabidopsis thaliana (Mouse-ear cress).